Consider the following 416-residue polypeptide: DNA-guanine transglycosylase (416 aa).

D95 acts as the Proton acceptor in catalysis. The Nucleophile role is filled by D256. Residues C368, C370, C373, and H395 each coordinate Zn(2+).

Belongs to the DNA-guanine transglycosylase family. Requires Zn(2+) as cofactor.

Part of the dpd cluster involved in the insertion of 7-deazaguanine derivatives in DNA. DpdA may insert 7-cyano-7-deazaguanine (preQ0) into DNA with the help of DpdB. DpdA and dpdB are necessary and sufficient to synthesize 2'-deoxy-7-cyano-7-deazaguanosine (dPreQ0). This is DNA-guanine transglycosylase from Salmonella montevideo.